We begin with the raw amino-acid sequence, 208 residues long: Transcription factor atf-4 homolog (208 aa).

Disordered stretches follow at residues 18–47 and 106–165; these read HNQTHSTPQYHNHHHHHHQSPTYPQSYFNP and ERRS…EKEE. Over residues 110 to 120 the composition is skewed to low complexity; the sequence is NSSASPASNWS. Residues 121–141 are compositionally biased toward basic and acidic residues; that stretch reads SDEHDSQSEKSYHPYKTPEKK. In terms of domain architecture, bZIP spans 138 to 201; sequence PEKKERKKAQ…RYFKKFMTEM (64 aa). The basic motif stretch occupies residues 140 to 163; sequence KKERKKAQNRLAATRYREKKRREK. A leucine-zipper region spans residues 173–187; sequence LSVTNGKLKDQVSEL.

It belongs to the bZIP family.

The protein localises to the nucleus. In terms of biological role, transcription factor. Involved in positively modulating longevity and stress tolerance, probably acting by positively regulating expression of transsulfuration enzyme cth-2, leading to increased hydrogen sulfide production and therefore increased protein persulfidation, a protective modification of redox-reactive cysteines. May mediate longevity and increased stress resistance induced by mTORC1 suppression. In Caenorhabditis elegans, this protein is Transcription factor atf-4 homolog.